The following is an 848-amino-acid chain: MSNWKTLLLRIGEKGPEYGTSSDYKDHIETCFGVIRREIERSGDQVLPFLLQCAEQLPHKIPLYGTLIGLLNLENEDFVQKLVESVHANFQVALDSGNCNSIRILLRFMTSLLCSKVIQPASLIVVFETLLSSAATTVDEEKGNPSWQPQADFYVICILSSLPWGGSELAEQVPDEIERVLVGIQAYLSIRKNSSTSGLNFFHNGEFESSLAEKDFVEDLLDRIQSLASNGWKLESVPRPHLSFEAQLVAGKFHELRPIKCMEQPSPPSDHSRAYSGKQKHDALTRYPQRIRRLNIFPANKMEDVQPIDRFVVEEYLLDVLFYLNGCRKECASYMANLPVTFRYEYLMAETLFSQILLLPQPPFKTLYYTLVIMDLCKALPGAFPAVVAGAVRALFEKISDLDMESRTRLILWFSHHLSNFQFIWPWEEWAFVLDLPKWAPKRVFVQEILQREVRLSYWDKIKQSIENATALEELLPPKAGPNFMYSLEEGKEKTEEQQLSAELSRKVKEKQTARDMIVWIEETIYPVHGFEVTLTIVVQTLLDIGSKSFTHLVTVLERYGQVFSKLCPDNDKQVMLLSQVSTYWKNNVQMTAVAIDRMMGYRLVSNQAIVRWVFSPENVDQFHVSDQPWEILGNALNKTYNRISDLRKDISNITKNVLVAEKASANARVELEAAESKLSLVEGEPVLGENPAKMKRLKSTVEKTGEAELSLRESLEAKEALLNRALSETEVLLLLLFQSFLGVLKERLPDPTKVRSVQDLKSIGAEDDKPSAMDVDSENGNPKKSCEVGEREQWCLSTLGYLTAFTRQYASEIWPHMEKLESEVFSGEDVHPLFLQAISSALQFPLH.

The 221-residue stretch at 8 to 228 (LLRIGEKGPE…DLLDRIQSLA (221 aa)) folds into the MIF4G domain. Residues 767–786 (EDDKPSAMDVDSENGNPKKS) form a disordered region.

It belongs to the NCBP1 family. In terms of assembly, component of the nuclear cap-binding complex (CBC), a heterodimer composed of ABH1/CBP80 and CBP20 that interacts with m7GpppG-capped RNA. As to expression, expressed in all tissues analyzed, including roots, stems, leaves and flowers.

Its subcellular location is the nucleus. It is found in the cytoplasm. Functionally, component of the cap-binding complex (CBC), which binds cotranscriptionally to the 5'-cap of pre-mRNAs and is involved in various processes such as pre-mRNA splicing and RNA-mediated gene silencing (RNAi) by microRNAs (miRNAs). The CBC complex is involved in miRNA-mediated RNA interference and is required for primary miRNA processing. In the CBC complex, ABH1/CBP80 does not bind directly capped RNAs (m7GpppG-capped RNA) but is required to stabilize the movement of the N-terminal loop of CBP20 and lock the CBC into a high affinity cap-binding state with the cap structure. Involved in flowering regulation, possibly by regulating pre-mRNA splicing of FLC gene. Acts as a negative regulator of abscisic acid signaling in guard cells. The sequence is that of Nuclear cap-binding protein subunit 1 (ABH1) from Arabidopsis thaliana (Mouse-ear cress).